The following is a 309-amino-acid chain: Putative lipid kinase YtlR (309 aa).

The DAGKc domain occupies 1–134 (MSHWFFIINP…FHLGSVNFLQ (134 aa)). Residues 9–13 (NPTAG), Thr40, and 69–75 (GDGTMHE) contribute to the ATP site. Mg(2+) contacts are provided by Asn229, Glu232, and Thr234. The Proton acceptor role is filled by Glu289.

Belongs to the diacylglycerol/lipid kinase family. Mg(2+) serves as cofactor.

In terms of biological role, may catalyze the ATP-dependent phosphorylation of lipids other than diacylglycerol (DAG). In fact, is not able to exhibit diacylglycerol kinase activity in vitro. The polypeptide is Putative lipid kinase YtlR (ytlR) (Bacillus subtilis (strain 168)).